The sequence spans 294 residues: Sulfotransferase 1E1 (294 aa).

Residue 47–52 (KSGTTW) coordinates 3'-phosphoadenylyl sulfate. A substrate-binding site is contributed by 105–107 (KTH). Histidine 107 (proton acceptor) is an active-site residue. 3'-phosphoadenylyl sulfate contacts are provided by residues arginine 129, serine 137, tyrosine 192, 226-231 (TSFQEM), and 256-258 (RKG).

Belongs to the sulfotransferase 1 family. As to quaternary structure, homodimer. Liver, intestine and at lower level in the kidney.

It is found in the cytoplasm. The protein resides in the cytosol. The catalysed reaction is estrone + 3'-phosphoadenylyl sulfate = estrone 3-sulfate + adenosine 3',5'-bisphosphate + H(+). It catalyses the reaction (24S)-hydroxycholesterol + 3'-phosphoadenylyl sulfate = (24S)-hydroxycholesterol 3-sulfate + adenosine 3',5'-bisphosphate + H(+). It carries out the reaction 17beta-estradiol + 3'-phosphoadenylyl sulfate = 17beta-estradiol 3-sulfate + adenosine 3',5'-bisphosphate + H(+). The enzyme catalyses 3beta-hydroxyandrost-5-en-17-one + 3'-phosphoadenylyl sulfate = dehydroepiandrosterone 3-sulfate + adenosine 3',5'-bisphosphate + H(+). The catalysed reaction is 4-ethylphenol + 3'-phosphoadenylyl sulfate = 4-ethylphenyl sulfate + adenosine 3',5'-bisphosphate + H(+). Inhibited by estradiol. Its function is as follows. Sulfotransferase that utilizes 3'-phospho-5'-adenylyl sulfate (PAPS) as sulfonate donor to catalyze the sulfate conjugation of estradiol and estrone. Is a key enzyme in estrogen homeostasis, the sulfation of estrogens leads to their inactivation. Also sulfates dehydroepiandrosterone (DHEA), pregnenolone, (24S)-hydroxycholesterol and xenobiotic compounds like ethinylestradiol, equalenin, diethyl stilbesterol and 1-naphthol at significantly lower efficiency. Does not sulfonate cortisol, testosterone and dopamine. May play a role in gut microbiota-host metabolic interaction. O-sulfonates 4-ethylphenol (4-EP), a dietary tyrosine-derived metabolite produced by gut bacteria. The product 4-EPS crosses the blood-brain barrier and may negatively regulate oligodendrocyte maturation and myelination, affecting the functional connectivity of different brain regions associated with the limbic system. The protein is Sulfotransferase 1E1 (SULT1E1) of Homo sapiens (Human).